The primary structure comprises 159 residues: MQTPTLHGDGFLLTRLDTLCDMVRSNSMWYLTFGLACCAVEMMQAAASRYDMDRFGMIPRASPRQADLIIVAGTLTNKMAPAIRKIYDQMAEPRYVISMGSCANGGGYYHYSYSVARGCDRILPVDIYIPGCPPTAEALLYGLIQLQNKLKRPPAVIAR.

[4Fe-4S] cluster is bound by residues Cys-37, Cys-38, Cys-102, and Cys-132.

Belongs to the complex I 20 kDa subunit family. As to quaternary structure, NDH-1 is composed of 14 different subunits. Subunits NuoB, C, D, E, F, and G constitute the peripheral sector of the complex. The cofactor is [4Fe-4S] cluster.

It localises to the cell inner membrane. The catalysed reaction is a quinone + NADH + 5 H(+)(in) = a quinol + NAD(+) + 4 H(+)(out). In terms of biological role, NDH-1 shuttles electrons from NADH, via FMN and iron-sulfur (Fe-S) centers, to quinones in the respiratory chain. Couples the redox reaction to proton translocation (for every two electrons transferred, four hydrogen ions are translocated across the cytoplasmic membrane), and thus conserves the redox energy in a proton gradient. The polypeptide is NADH-quinone oxidoreductase subunit B 2 (Azoarcus sp. (strain BH72)).